Here is a 429-residue protein sequence, read N- to C-terminus: UPF0242 protein CT_616 (429 aa).

It belongs to the UPF0242 family.

The chain is UPF0242 protein CT_616 from Chlamydia trachomatis serovar D (strain ATCC VR-885 / DSM 19411 / UW-3/Cx).